Reading from the N-terminus, the 428-residue chain is Enolase (428 aa).

Glutamine 163 provides a ligand contact to (2R)-2-phosphoglycerate. Glutamate 205 functions as the Proton donor in the catalytic mechanism. Residues aspartate 242, glutamate 285, and aspartate 312 each coordinate Mg(2+). Residues lysine 337, arginine 366, serine 367, and lysine 388 each contribute to the (2R)-2-phosphoglycerate site. The active-site Proton acceptor is lysine 337.

Belongs to the enolase family. Mg(2+) is required as a cofactor.

It is found in the cytoplasm. The protein localises to the secreted. Its subcellular location is the cell surface. It catalyses the reaction (2R)-2-phosphoglycerate = phosphoenolpyruvate + H2O. It functions in the pathway carbohydrate degradation; glycolysis; pyruvate from D-glyceraldehyde 3-phosphate: step 4/5. Its function is as follows. Catalyzes the reversible conversion of 2-phosphoglycerate (2-PG) into phosphoenolpyruvate (PEP). It is essential for the degradation of carbohydrates via glycolysis. The protein is Enolase of Neisseria meningitidis serogroup A / serotype 4A (strain DSM 15465 / Z2491).